Here is a 308-residue protein sequence, read N- to C-terminus: Cytochrome b (308 aa).

Helical transmembrane passes span 1-21 (FGLLLGICLIVQIVTGLLLAA), 45-66 (WLIRNLHANGASFFFICIYLHI), 81-101 (WNIGVILLLTLMATAFVGYVL), and 146-166 (FFALHFLLPFVIAGLTLVHLT). Residues H51 and H65 each contribute to the heme b site. Residues H150 and H164 each contribute to the heme b site. H169 contributes to the a ubiquinone binding site. Transmembrane regions (helical) follow at residues 194 to 214 (TKDMLGFALMLIPLITLALFS), 256 to 276 (LGGVLALAASVLVLFLIPLLH), and 288 to 308 (LSQILFWTLVANLLVLTWVGS).

The protein belongs to the cytochrome b family. The cytochrome bc1 complex contains 11 subunits: 3 respiratory subunits (MT-CYB, CYC1 and UQCRFS1), 2 core proteins (UQCRC1 and UQCRC2) and 6 low-molecular weight proteins (UQCRH/QCR6, UQCRB/QCR7, UQCRQ/QCR8, UQCR10/QCR9, UQCR11/QCR10 and a cleavage product of UQCRFS1). This cytochrome bc1 complex then forms a dimer. Requires heme b as cofactor.

The protein resides in the mitochondrion inner membrane. In terms of biological role, component of the ubiquinol-cytochrome c reductase complex (complex III or cytochrome b-c1 complex) that is part of the mitochondrial respiratory chain. The b-c1 complex mediates electron transfer from ubiquinol to cytochrome c. Contributes to the generation of a proton gradient across the mitochondrial membrane that is then used for ATP synthesis. The polypeptide is Cytochrome b (MT-CYB) (Pomatostomus temporalis (Grey-crowned babbler)).